We begin with the raw amino-acid sequence, 274 residues long: 2,3,4,5-tetrahydropyridine-2,6-dicarboxylate N-succinyltransferase (274 aa).

Residues R104 and D141 each coordinate substrate.

Belongs to the transferase hexapeptide repeat family. As to quaternary structure, homotrimer.

The protein localises to the cytoplasm. The catalysed reaction is (S)-2,3,4,5-tetrahydrodipicolinate + succinyl-CoA + H2O = (S)-2-succinylamino-6-oxoheptanedioate + CoA. It functions in the pathway amino-acid biosynthesis; L-lysine biosynthesis via DAP pathway; LL-2,6-diaminopimelate from (S)-tetrahydrodipicolinate (succinylase route): step 1/3. The protein is 2,3,4,5-tetrahydropyridine-2,6-dicarboxylate N-succinyltransferase of Salmonella arizonae (strain ATCC BAA-731 / CDC346-86 / RSK2980).